Consider the following 234-residue polypeptide: Sugar fermentation stimulation protein homolog (234 aa).

The protein belongs to the SfsA family.

This is Sugar fermentation stimulation protein homolog from Pectobacterium carotovorum subsp. carotovorum (strain PC1).